We begin with the raw amino-acid sequence, 226 residues long: MATPASITNVTVEFLQFPALVTPPASTKSYFLGGAGVRGLNIQEEFVKFTGIGVYLEDKAVSSLGAKWKGKSAAELLDSLDFYRDIIKGPFEKLIRGSKLRTLDGREYVRKVSENCVAHMESVGTYSEAEEKAIEEFRNAFKDQNFPPGSTVFYKQSPTGTLGLSFSKDETIPEHEHAVIDNKPLSEAVLETMIGEIPVSPALKESLATRFHQFFKELEANPNIEN.

The substrate site is built by T50, N115, and T192.

The protein belongs to the chalcone isomerase family. In terms of tissue distribution, expressed in roots, shoots, flowers and seeds.

It carries out the reaction a chalcone = a flavanone.. It participates in secondary metabolite biosynthesis; flavonoid biosynthesis. Catalyzes the intramolecular cyclization of bicyclic chalcones into tricyclic (S)-flavanones. Responsible for the isomerization of 4,2',4',6'-tetrahydroxychalcone (also termed chalcone) into naringenin. This Glycine max (Soybean) protein is Chalcone--flavanone isomerase 1B-2 (CHI1B2).